Here is a 373-residue protein sequence, read N- to C-terminus: Carboxylesterase/phospholipase LipF (373 aa).

The Involved in the stabilization of the negatively charged intermediate by the formation of the oxyanion hole signature appears at 116–118; that stretch reads HGG. Catalysis depends on residues serine 186, glutamate 285, and histidine 315.

Belongs to the 'GDXG' lipolytic enzyme family.

The catalysed reaction is a carboxylic ester + H2O = an alcohol + a carboxylate + H(+). The enzyme catalyses a 1,2-diacyl-sn-glycero-3-phosphocholine + H2O = phosphocholine + a 1,2-diacyl-sn-glycerol + H(+). In terms of biological role, a short-chain esterase and phospholipase. This is Carboxylesterase/phospholipase LipF from Mycobacterium tuberculosis (strain CDC 1551 / Oshkosh).